Consider the following 399-residue polypeptide: Large envelope protein (399 aa).

Residue Met-1 is modified to N-acetylmethionine. Gly-2 carries N-myristoyl glycine; by host lipidation. The segment at 2–118 (GLSWTVPLEW…PPLRDSHPQA (117 aa)) is pre-S1. The pre-S stretch occupies residues 2–173 (GLSWTVPLEW…FSRIGDPAPN (172 aa)). Over 2–180 (GLSWTVPLEW…APNMENITSG (179 aa)) the chain is Virion surface; in external conformation. Topologically, residues 2-252 (GLSWTVPLEW…PGYRWMCLRR (251 aa)) are intravirion; in internal conformation. N-linked (GlcNAc...) asparagine glycosylation occurs at Ser-4. Residues 69–117 (PHGGLLGWSPQSQGTLTTLPADPPPASTNRQSGRQPTPISPPLRDSHPQ) are disordered. The interval 119 to 173 (MQWNSTAFHQALQNPKVRGLYFPAGGSSSGIVNPVPTIASHISSIFSRIGDPAPN) is pre-S2. The chain crosses the membrane as a helical span at residues 181 to 201 (FLGPLLVLQAGFFLLTRILTI). Topologically, residues 202 to 252 (PQSLDSWWTSLNFLGGVPVCPGLNSQSPTSNHSPISCPPTCPGYRWMCLRR) are intravirion; in external conformation. The chain crosses the membrane as a helical span at residues 253-273 (FIIFLFILLLCLIFLLVLLDY). The Virion surface portion of the chain corresponds to 274 to 347 (QGMLPVCPLI…WASVRFSWLS (74 aa)). N-linked (GlcNAc...) asparagine; by host glycosylation occurs at Asn-319. A helical transmembrane segment spans residues 348 to 368 (LLVPFVQWFVGLSPTVWLSAI). Over 369–374 (WMMWYW) the chain is Intravirion. The helical transmembrane segment at 375–397 (GPNLYNILSPFIPLLPIFFCLWV) threads the bilayer. The Virion surface portion of the chain corresponds to 398–399 (YI).

It belongs to the orthohepadnavirus major surface antigen family. As to quaternary structure, in its internal form (Li-HBsAg), interacts with the capsid protein and with the isoform S. Interacts with host chaperone CANX. In terms of assembly, associates with host chaperone CANX through its pre-S2 N glycan; this association may be essential for isoform M proper secretion. Interacts with isoform L. Interacts with the antigens of satellite virus HDV (HDVAgs); this interaction is required for encapsidation of HDV genomic RNA. Isoform M is N-terminally acetylated by host at a ratio of 90%, and N-glycosylated by host at the pre-S2 region. In terms of processing, myristoylated.

Its subcellular location is the virion membrane. The large envelope protein exists in two topological conformations, one which is termed 'external' or Le-HBsAg and the other 'internal' or Li-HBsAg. In its external conformation the protein attaches the virus to cell receptors and thereby initiating infection. This interaction determines the species specificity and liver tropism. This attachment induces virion internalization predominantly through caveolin-mediated endocytosis. The large envelope protein also assures fusion between virion membrane and endosomal membrane. In its internal conformation the protein plays a role in virion morphogenesis and mediates the contact with the nucleocapsid like a matrix protein. Its function is as follows. The middle envelope protein plays an important role in the budding of the virion. It is involved in the induction of budding in a nucleocapsid independent way. In this process the majority of envelope proteins bud to form subviral lipoprotein particles of 22 nm of diameter that do not contain a nucleocapsid. The protein is Large envelope protein of Hepatitis B virus genotype G (isolate IG29227/2000) (HBV-G).